A 262-amino-acid polypeptide reads, in one-letter code: Sulfur carrier protein FdhD (262 aa).

Cys107 (cysteine persulfide intermediate) is an active-site residue.

It belongs to the FdhD family.

The protein resides in the cytoplasm. In terms of biological role, required for formate dehydrogenase (FDH) activity. Acts as a sulfur carrier protein that transfers sulfur from IscS to the molybdenum cofactor prior to its insertion into FDH. In Bacillus pumilus (strain SAFR-032), this protein is Sulfur carrier protein FdhD.